The sequence spans 160 residues: Nucleotide-binding protein BP2916 (160 aa).

Belongs to the YajQ family.

Functionally, nucleotide-binding protein. In Bordetella pertussis (strain Tohama I / ATCC BAA-589 / NCTC 13251), this protein is Nucleotide-binding protein BP2916.